Here is a 361-residue protein sequence, read N- to C-terminus: 3-dehydroquinate synthase (361 aa).

It belongs to the archaeal-type DHQ synthase family.

The enzyme catalyses 2-amino-2,3,7-trideoxy-D-lyxo-hept-6-ulosonate + NAD(+) + H2O = 3-dehydroquinate + NH4(+) + NADH + H(+). In terms of biological role, catalyzes the oxidative deamination and cyclization of 2-amino-3,7-dideoxy-D-threo-hept-6-ulosonic acid (ADH) to yield 3-dehydroquinate (DHQ), which is fed into the canonical shikimic pathway of aromatic amino acid biosynthesis. This Methanococcus maripaludis (strain C7 / ATCC BAA-1331) protein is 3-dehydroquinate synthase.